A 494-amino-acid chain; its full sequence is Glutamyl-tRNA(Gln) amidotransferase subunit A (494 aa).

Active-site charge relay system residues include Lys79 and Ser159. The Acyl-ester intermediate role is filled by Ser183.

The protein belongs to the amidase family. GatA subfamily. As to quaternary structure, heterotrimer of A, B and C subunits.

The enzyme catalyses L-glutamyl-tRNA(Gln) + L-glutamine + ATP + H2O = L-glutaminyl-tRNA(Gln) + L-glutamate + ADP + phosphate + H(+). Functionally, allows the formation of correctly charged Gln-tRNA(Gln) through the transamidation of misacylated Glu-tRNA(Gln) in organisms which lack glutaminyl-tRNA synthetase. The reaction takes place in the presence of glutamine and ATP through an activated gamma-phospho-Glu-tRNA(Gln). In Bartonella henselae (strain ATCC 49882 / DSM 28221 / CCUG 30454 / Houston 1) (Rochalimaea henselae), this protein is Glutamyl-tRNA(Gln) amidotransferase subunit A.